We begin with the raw amino-acid sequence, 1898 residues long: 1-phosphatidylinositol 4,5-bisphosphate phosphodiesterase epsilon-1 (1898 aa).

The 263-residue stretch at 66 to 328 folds into the Ras-GEF domain; sequence FPEEVAFQLS…EREQKEKEAK (263 aa). Disordered regions lie at residues 419 to 444 and 569 to 722; these read QPLD…GVGV and TNTN…GPSG. The segment covering 569-583 has biased composition (polar residues); the sequence is TNTNATRPNDSSLSS. Residues 590-605 show a composition bias toward basic residues; it reads SRLKNLKNAMQKKLRG. Low complexity-rich tracts occupy residues 625 to 637, 666 to 687, and 701 to 716; these read PPSI…SQSG, YTPR…GGRS, and SGSI…QVSG. Positions 910–1058 constitute a PI-PLC X-box domain; that stretch reads EDLRYPLSHY…MKNKILIKNK (149 aa). Catalysis depends on residues His-925 and His-970. Disordered regions lie at residues 1082–1178 and 1238–1274; these read QLNL…DRKT and EEGP…STQL. Over residues 1098 to 1123 the composition is skewed to acidic residues; that stretch reads TVDEVEDDDLDEFLDDEENEEDDQEE. Residues 1124-1144 show a composition bias toward basic and acidic residues; that stretch reads VQVRSEKEDSPKTSKRAEKSA. A compositionally biased stretch (polar residues) spans 1146-1155; that stretch reads NIKQQDSLCS. Low complexity-rich tracts occupy residues 1163–1172 and 1242–1253; these read KPSTSKTTSK and ASASLSFSSRAR. The region spanning 1279–1385 is the PI-PLC Y-box domain; that stretch reads AAEFLGSVRA…CGYQLKPRCL (107 aa). The C2 domain occupies 1391–1517; it reads LLYNKFLPLS…PLRTPTNLPI (127 aa). Positions 1570-1665 constitute a Ras-associating 1 domain; that stretch reads QIFVLRITGA…RRFVLRKKGS (96 aa). Residues 1680–1694 are compositionally biased toward low complexity; sequence GTSGSSTSVSPSPLT. Positions 1680 to 1711 are disordered; the sequence is GTSGSSTSVSPSPLTKDGHVKSASSNQLHGRS. The region spanning 1738–1857 is the Ras-associating 2 domain; it reads DTFLVCVHNV…GRFVLENRKD (120 aa).

As to quaternary structure, interacts (via Ras-associating domain 1) with let-60 (in GTP-bound form). The cofactor is Ca(2+). As to expression, expressed in the spermatheca, vulva, intestine and excretory cells. Expressed in sensory neurons AWC, AFD, ASE, ASG and BAG, interneurons, ventral nerve cord neurons and tail neurons. Expressed in body muscles.

The enzyme catalyses a 1,2-diacyl-sn-glycero-3-phospho-(1D-myo-inositol-4,5-bisphosphate) + H2O = 1D-myo-inositol 1,4,5-trisphosphate + a 1,2-diacyl-sn-glycerol + H(+). Functionally, the production of the second messenger molecules diacylglycerol (DAG) and inositol 1,4,5-trisphosphate (IP3) is mediated by activated phosphatidylinositol-specific phospholipase C enzymes. plc-1 is a bifunctional enzyme which also regulates small GTPases of the Ras superfamily through its Ras guanine-exchange factor (RasGEF) activity. By activating IP3 receptor itr-1-mediated intracellular Ca(2+) release via the production of IP3, regulates ovulation by controlling contraction and/or dilation of the distal spermatheca valve during oocyte entry and the timing of the dilation of the spermatheca-uterine valve during oocyte exit. In a similar manner, plays an essential role in epidermal morphogenesis by regulating migration of epidermal cells during ventral closure and to a lesser extent by regulating epidermal cell dorsal intercalation. Involved in the immune response to S.aureus bacterium by activating kinase dkf-1 via the production of DAG which in turn activates transcription factor hlh-30. In ASER neurons, required for adjusting the orientation behavior in salt gradients based on the memory of previous salt concentration encountered. In Caenorhabditis elegans, this protein is 1-phosphatidylinositol 4,5-bisphosphate phosphodiesterase epsilon-1.